Consider the following 186-residue polypeptide: Ribosome-recycling factor (186 aa).

It belongs to the RRF family.

The protein localises to the cytoplasm. Responsible for the release of ribosomes from messenger RNA at the termination of protein biosynthesis. May increase the efficiency of translation by recycling ribosomes from one round of translation to another. The chain is Ribosome-recycling factor from Ralstonia pickettii (strain 12J).